We begin with the raw amino-acid sequence, 276 residues long: Ribosomal RNA small subunit methyltransferase A (276 aa).

The S-adenosyl-L-methionine site is built by Asn-27, Leu-29, Gly-54, Glu-75, Asp-101, and Asn-122.

This sequence belongs to the class I-like SAM-binding methyltransferase superfamily. rRNA adenine N(6)-methyltransferase family. RsmA subfamily.

The protein localises to the cytoplasm. The catalysed reaction is adenosine(1518)/adenosine(1519) in 16S rRNA + 4 S-adenosyl-L-methionine = N(6)-dimethyladenosine(1518)/N(6)-dimethyladenosine(1519) in 16S rRNA + 4 S-adenosyl-L-homocysteine + 4 H(+). In terms of biological role, specifically dimethylates two adjacent adenosines (A1518 and A1519) in the loop of a conserved hairpin near the 3'-end of 16S rRNA in the 30S particle. May play a critical role in biogenesis of 30S subunits. The polypeptide is Ribosomal RNA small subunit methyltransferase A (Brucella abortus (strain S19)).